Here is a 204-residue protein sequence, read N- to C-terminus: uncharacterized protein (204 aa).

Residues 77–111 form a disordered region; the sequence is APHGSRIPGRCRRSPRCSRRPGGSRLRGGTWTPRL. Residues 85 to 95 are compositionally biased toward basic residues; it reads GRCRRSPRCSR. Low complexity predominate over residues 96 to 105; the sequence is RPGGSRLRGG.

This is an uncharacterized protein from Homo sapiens (Human).